We begin with the raw amino-acid sequence, 170 residues long: Photosystem II extrinsic protein V (170 aa).

A signal peptide spans 1–33 (MASLFSTLQRSLKGLLILVPVLIGLVLASPAEA). Residues Cys70, Cys73, His74, and Met137 each coordinate heme c.

It belongs to the cytochrome c family. PsbV subfamily. In terms of assembly, PSII is composed of 1 copy each of membrane proteins PsbA, PsbB, PsbC, PsbD, PsbE, PsbF, PsbH, PsbI, PsbJ, PsbK, PsbL, PsbM, PsbT, PsbX, PsbY, PsbZ, Psb30/Ycf12, peripheral proteins PsbO, CyanoQ (PsbQ), PsbU, PsbV and a large number of cofactors. It forms dimeric complexes. Requires heme c as cofactor.

It localises to the cellular thylakoid membrane. In terms of biological role, one of the extrinsic, lumenal subunits of photosystem II (PSII). PSII is a light-driven water plastoquinone oxidoreductase, using light energy to abstract electrons from H(2)O, generating a proton gradient subsequently used for ATP formation. The extrinsic proteins stabilize the structure of photosystem II oxygen-evolving complex (OEC), the ion environment of oxygen evolution and protect the OEC against heat-induced inactivation. Low-potential cytochrome c that plays a role in the OEC of PSII. The protein is Photosystem II extrinsic protein V of Parasynechococcus marenigrum (strain WH8102).